A 70-amino-acid chain; its full sequence is MPITSKYTNQKIEQIISDVFDVLEKHDASAELALMVVGNIATNIINADVPASKKKEIAEQFSQALLKSTK.

Belongs to the UPF0352 family.

The protein is UPF0352 protein PBPRA2586 of Photobacterium profundum (strain SS9).